The sequence spans 353 residues: Histidinol-phosphate aminotransferase (353 aa).

Lys-218 bears the N6-(pyridoxal phosphate)lysine mark.

The protein belongs to the class-II pyridoxal-phosphate-dependent aminotransferase family. Histidinol-phosphate aminotransferase subfamily. In terms of assembly, homodimer. Requires pyridoxal 5'-phosphate as cofactor.

It carries out the reaction L-histidinol phosphate + 2-oxoglutarate = 3-(imidazol-4-yl)-2-oxopropyl phosphate + L-glutamate. It functions in the pathway amino-acid biosynthesis; L-histidine biosynthesis; L-histidine from 5-phospho-alpha-D-ribose 1-diphosphate: step 7/9. The polypeptide is Histidinol-phosphate aminotransferase (Synechococcus sp. (strain JA-3-3Ab) (Cyanobacteria bacterium Yellowstone A-Prime)).